The primary structure comprises 329 residues: Ribosomal RNA small subunit methyltransferase C (329 aa).

The protein belongs to the methyltransferase superfamily. RsmC family. Monomer.

Its subcellular location is the cytoplasm. It catalyses the reaction guanosine(1207) in 16S rRNA + S-adenosyl-L-methionine = N(2)-methylguanosine(1207) in 16S rRNA + S-adenosyl-L-homocysteine + H(+). In terms of biological role, specifically methylates the guanine in position 1207 of 16S rRNA in the 30S particle. In Actinobacillus pleuropneumoniae serotype 3 (strain JL03), this protein is Ribosomal RNA small subunit methyltransferase C.